The sequence spans 238 residues: Ribonuclease PH (238 aa).

Phosphate is bound by residues arginine 86 and glycine 124–arginine 126.

Belongs to the RNase PH family. In terms of assembly, homohexameric ring arranged as a trimer of dimers.

The catalysed reaction is tRNA(n+1) + phosphate = tRNA(n) + a ribonucleoside 5'-diphosphate. Its function is as follows. Phosphorolytic 3'-5' exoribonuclease that plays an important role in tRNA 3'-end maturation. Removes nucleotide residues following the 3'-CCA terminus of tRNAs; can also add nucleotides to the ends of RNA molecules by using nucleoside diphosphates as substrates, but this may not be physiologically important. Probably plays a role in initiation of 16S rRNA degradation (leading to ribosome degradation) during starvation. This chain is Ribonuclease PH, found in Anaeromyxobacter sp. (strain Fw109-5).